The primary structure comprises 123 residues: Large ribosomal subunit protein bL12 (123 aa).

Belongs to the bacterial ribosomal protein bL12 family. In terms of assembly, homodimer. Part of the ribosomal stalk of the 50S ribosomal subunit. Forms a multimeric L10(L12)X complex, where L10 forms an elongated spine to which 2 to 4 L12 dimers bind in a sequential fashion. Binds GTP-bound translation factors.

Forms part of the ribosomal stalk which helps the ribosome interact with GTP-bound translation factors. Is thus essential for accurate translation. The polypeptide is Large ribosomal subunit protein bL12 (Chlorobium phaeovibrioides (strain DSM 265 / 1930) (Prosthecochloris vibrioformis (strain DSM 265))).